The following is a 245-amino-acid chain: Enolase-phosphatase E1 (245 aa).

Belongs to the HAD-like hydrolase superfamily. MasA/MtnC family. As to quaternary structure, monomer. Requires Mg(2+) as cofactor.

The catalysed reaction is 5-methylsulfanyl-2,3-dioxopentyl phosphate + H2O = 1,2-dihydroxy-5-(methylsulfanyl)pent-1-en-3-one + phosphate. Its pathway is amino-acid biosynthesis; L-methionine biosynthesis via salvage pathway; L-methionine from S-methyl-5-thio-alpha-D-ribose 1-phosphate: step 3/6. The protein operates within amino-acid biosynthesis; L-methionine biosynthesis via salvage pathway; L-methionine from S-methyl-5-thio-alpha-D-ribose 1-phosphate: step 4/6. In terms of biological role, bifunctional enzyme that catalyzes the enolization of 2,3-diketo-5-methylthiopentyl-1-phosphate (DK-MTP-1-P) into the intermediate 2-hydroxy-3-keto-5-methylthiopentenyl-1-phosphate (HK-MTPenyl-1-P), which is then dephosphorylated to form the acireductone 1,2-dihydroxy-3-keto-5-methylthiopentene (DHK-MTPene). The chain is Enolase-phosphatase E1 from Synechococcus sp. (strain CC9902).